The following is a 1066-amino-acid chain: Glucose transport transcription regulator RGT1 (1066 aa).

2 stretches are compositionally biased toward polar residues: residues 1–11 and 42–57; these read MTPMSENNGSE and VESQSSQGASGGNTSA. 6 disordered regions span residues 1-70, 108-153, 214-285, 298-399, 616-645, and 849-871; these read MTPM…ACDQ, PSKG…VLLP, YASP…QQQY, GANG…EYPL, DATKSGSNDNDNTNNDNNSNNANNDNNDSR, and MEHDDSGNSASRKFTTSQAESGK. The segment at residues 68–97 is a DNA-binding region (zn(2)-C6 fungal-type); the sequence is CDQCRKRKIRCDYDDDKGVCTSCRKNGESC. Composition is skewed to polar residues over residues 118–131, 139–148, 260–270, and 314–327; these read VSRSISGENNNTAA, EFSSPSSRQG, GSNPPSLKNVS, and MSPSASVPYQSVPM. 2 stretches are compositionally biased toward low complexity: residues 328 to 350 and 622 to 641; these read NQSNSNGLSQQQQQPIQWPKVQP and SNDNDNTNNDNNSNNANNDN. Polar residues predominate over residues 855–871; the sequence is GNSASRKFTTSQAESGK.

The protein belongs to the EDS1/RGT1 family.

Its subcellular location is the nucleus. It localises to the cytoplasm. Functionally, glucose-responsive transcription factor that regulates expression of several glucose transporter (HXT) genes in response to glucose. In the absence of glucose, it functions as a transcriptional repressor, whereas high concentrations of glucose cause it to function as a transcriptional activator. In cells growing on low levels of glucose, has a neutral role, neither repressing nor activating transcription. The sequence is that of Glucose transport transcription regulator RGT1 (RGT1) from Zygosaccharomyces rouxii (strain ATCC 2623 / CBS 732 / NBRC 1130 / NCYC 568 / NRRL Y-229).